Reading from the N-terminus, the 257-residue chain is Hydroxyacylglutathione hydrolase (257 aa).

Zn(2+) is bound by residues His-54, His-56, Asp-58, His-59, His-113, Asp-137, and His-175.

The protein belongs to the metallo-beta-lactamase superfamily. Glyoxalase II family. Monomer. Requires Zn(2+) as cofactor.

It carries out the reaction an S-(2-hydroxyacyl)glutathione + H2O = a 2-hydroxy carboxylate + glutathione + H(+). It functions in the pathway secondary metabolite metabolism; methylglyoxal degradation; (R)-lactate from methylglyoxal: step 2/2. Functionally, thiolesterase that catalyzes the hydrolysis of S-D-lactoyl-glutathione to form glutathione and D-lactic acid. The polypeptide is Hydroxyacylglutathione hydrolase (Microcystis aeruginosa (strain NIES-843 / IAM M-2473)).